The following is a 422-amino-acid chain: MLRVRCVRGGSRGAEAVHYIGSMLRKGFVGWVQRSFQSTQAAAVSEKPCAADEKVSDTAVQECPVCSYNEWDPLEEVIVGRPENANVPPFSVEVKANTYEKYWPFYQKHGGQSFPVEHVKKATEEIEEMCNVLRHEGVVVQRPEVIDWSVKYKTPDFESTGMYAAMPRDILLVVGNEIIEAPMAWRARFFEYRAYRPLIKDYFRRGAKWTTAPKPTMADELYDQDYPIRTVEDRHKLAAMGKFVTTEFEPCFDAADFMRAGRDIFAQRSQVTNYLGIEWMRRHLAPDYKVHIISFKDPNPMHIDATFNIIGPGLVLSNPDRPCHQIELFKKAGWTVVTPPIPLIPDNHPLWMSSKWLSMNVLMLDEKRVMVDANETSIQKMFEKLGISTIKVNIRHANSLGGGFHCWTCDIRRRGTLQSYFS.

A mitochondrion-targeting transit peptide spans 1–37 (MLRVRCVRGGSRGAEAVHYIGSMLRKGFVGWVQRSFQ). Residues Asp253 and His302 contribute to the active site. The active-site Amidino-cysteine intermediate is the Cys406.

The protein belongs to the amidinotransferase family. Homodimer.

The protein resides in the mitochondrion inner membrane. The enzyme catalyses L-arginine + glycine = guanidinoacetate + L-ornithine. Its pathway is amine and polyamine biosynthesis; creatine biosynthesis; creatine from L-arginine and glycine: step 1/2. Functionally, catalyzes the biosynthesis of guanidinoacetate, the immediate precursor of creatine. Creatine plays a vital role in energy metabolism in muscle tissues. May play a role in embryonic and central nervous system development. This Xenopus tropicalis (Western clawed frog) protein is Glycine amidinotransferase, mitochondrial.